A 262-amino-acid polypeptide reads, in one-letter code: Hydroxyethylthiazole kinase (262 aa).

Met44 contacts substrate. ATP contacts are provided by Arg118 and Thr166. Substrate is bound at residue Gly193.

Belongs to the Thz kinase family. The cofactor is Mg(2+).

It carries out the reaction 5-(2-hydroxyethyl)-4-methylthiazole + ATP = 4-methyl-5-(2-phosphooxyethyl)-thiazole + ADP + H(+). The protein operates within cofactor biosynthesis; thiamine diphosphate biosynthesis; 4-methyl-5-(2-phosphoethyl)-thiazole from 5-(2-hydroxyethyl)-4-methylthiazole: step 1/1. Functionally, catalyzes the phosphorylation of the hydroxyl group of 4-methyl-5-beta-hydroxyethylthiazole (THZ). The protein is Hydroxyethylthiazole kinase of Chlamydia caviae (strain ATCC VR-813 / DSM 19441 / 03DC25 / GPIC) (Chlamydophila caviae).